Reading from the N-terminus, the 39-residue chain is Photosystem II reaction center protein Psb30 (39 aa).

A helical membrane pass occupies residues 12–32 (IFQLTFVALIMLAGPFVIFLL).

Belongs to the Psb30/Ycf12 family. PSII is composed of 1 copy each of membrane proteins PsbA, PsbB, PsbC, PsbD, PsbE, PsbF, PsbH, PsbI, PsbJ, PsbK, PsbL, PsbM, PsbT, PsbX, PsbY, PsbZ, Psb30/Ycf12, peripheral proteins PsbO, CyanoQ (PsbQ), PsbU, PsbV and a large number of cofactors. It forms dimeric complexes.

It is found in the cellular thylakoid membrane. A core subunit of photosystem II (PSII), probably helps stabilize the reaction center. In Microcystis aeruginosa (strain NIES-843 / IAM M-2473), this protein is Photosystem II reaction center protein Psb30.